The following is a 300-amino-acid chain: UDP-N-acetylenolpyruvoylglucosamine reductase (300 aa).

Positions 22 to 190 (RVGGAAEWLA…LSARFRLQPG (169 aa)) constitute an FAD-binding PCMH-type domain. The active site involves R169. S220 functions as the Proton donor in the catalytic mechanism. The active site involves E290.

It belongs to the MurB family. It depends on FAD as a cofactor.

Its subcellular location is the cytoplasm. The catalysed reaction is UDP-N-acetyl-alpha-D-muramate + NADP(+) = UDP-N-acetyl-3-O-(1-carboxyvinyl)-alpha-D-glucosamine + NADPH + H(+). The protein operates within cell wall biogenesis; peptidoglycan biosynthesis. In terms of biological role, cell wall formation. This chain is UDP-N-acetylenolpyruvoylglucosamine reductase, found in Synechococcus sp. (strain CC9605).